The chain runs to 391 residues: Multidrug resistance protein MdtL (391 aa).

Residues 1–3 (MSR) are Cytoplasmic-facing. Residues 4-24 (FLICSFALVLLYPAGIDMYLV) form a helical membrane-spanning segment. Over 25–41 (GLPRIAADLNASEAQLH) the chain is Periplasmic. Residues 42–62 (IAFSVYLAGMAAAMLFAGKVA) traverse the membrane as a helical segment. Topologically, residues 63–68 (DRSGRK) are cytoplasmic. The chain crosses the membrane as a helical span at residues 69–89 (PVAIPGAALFIIASVFCSLAE). The Periplasmic segment spans residues 90–92 (TSA). A helical membrane pass occupies residues 93 to 113 (LFLAGRFLQGLGAGCCYVVAF). The Cytoplasmic segment spans residues 114–130 (AILRDTLDDRRRAKVLS). A helical transmembrane segment spans residues 131–151 (LLNGITCIIPVLAPVLGHLIM). Topologically, residues 152 to 157 (LKFPWQ) are periplasmic. Residues 158 to 178 (SLFWTMATMGIAVLMLSLFIL) form a helical membrane-spanning segment. Topologically, residues 179–202 (KETRPAAPAASDKPRENSESLLNR) are cytoplasmic. The chain crosses the membrane as a helical span at residues 203–222 (FFLSRVVITTLSVSVILTFV). The Periplasmic segment spans residues 223-244 (NTSPVLLMEIMGFERGEYATIM). The chain crosses the membrane as a helical span at residues 245–265 (ALTAGVSMTVSFSTPFALGIF). Residues 266-268 (KPR) lie on the Cytoplasmic side of the membrane. Residues 269-289 (TLMITSQVLFLAAGITLAVSP) form a helical membrane-spanning segment. Residues 290-292 (SHA) are Periplasmic-facing. Residues 293 to 313 (VSLFGITLICAGFSVGFGVAM) traverse the membrane as a helical segment. Residues 314-330 (SQALGPFSLRAGVASST) lie on the Cytoplasmic side of the membrane. A helical transmembrane segment spans residues 331-351 (LGIAQVCGSSLWIWLAAVVGI). Over 352 to 355 (GAWN) the chain is Periplasmic. A helical transmembrane segment spans residues 356 to 376 (MLIGILIACSIVSLLLIMFVA). Over 377–391 (PGRPVAAHEEIHHHA) the chain is Cytoplasmic.

The protein belongs to the major facilitator superfamily. DHA1 family. MdtL (TC 2.A.1.2.22) subfamily.

It localises to the cell inner membrane. Confers resistance to chloramphenicol. The sequence is that of Multidrug resistance protein MdtL from Escherichia coli O6:K15:H31 (strain 536 / UPEC).